Reading from the N-terminus, the 361-residue chain is Histidinol-phosphate aminotransferase (361 aa).

Lys218 is modified (N6-(pyridoxal phosphate)lysine).

It belongs to the class-II pyridoxal-phosphate-dependent aminotransferase family. Histidinol-phosphate aminotransferase subfamily. Homodimer. Requires pyridoxal 5'-phosphate as cofactor.

It carries out the reaction L-histidinol phosphate + 2-oxoglutarate = 3-(imidazol-4-yl)-2-oxopropyl phosphate + L-glutamate. Its pathway is amino-acid biosynthesis; L-histidine biosynthesis; L-histidine from 5-phospho-alpha-D-ribose 1-diphosphate: step 7/9. This Dinoroseobacter shibae (strain DSM 16493 / NCIMB 14021 / DFL 12) protein is Histidinol-phosphate aminotransferase.